The following is a 339-amino-acid chain: Serine/threonine-protein kinase pdik1l-B (339 aa).

One can recognise a Protein kinase domain in the interval 8 to 332; the sequence is YDLIREVGRG…LELKLIQIAF (325 aa). ATP-binding positions include 14 to 22 and Lys-37; that span reads VGRGSYGLV. The active-site Proton acceptor is Asp-164.

Belongs to the protein kinase superfamily. Ser/Thr protein kinase family.

It is found in the nucleus. It carries out the reaction L-seryl-[protein] + ATP = O-phospho-L-seryl-[protein] + ADP + H(+). The catalysed reaction is L-threonyl-[protein] + ATP = O-phospho-L-threonyl-[protein] + ADP + H(+). The polypeptide is Serine/threonine-protein kinase pdik1l-B (pdik1-b) (Xenopus laevis (African clawed frog)).